Here is a 117-residue protein sequence, read N- to C-terminus: DNA-binding protein DDB_G0278111 (117 aa).

Residues 1–40 form a disordered region; sequence MSSEKEIQQQLSQMQGQGFDPEAQQRQEAQRQEANERRQG. The span at 8 to 22 shows a compositional bias: low complexity; the sequence is QQQLSQMQGQGFDPE. Basic and acidic residues predominate over residues 23–39; sequence AQQRQEAQRQEANERRQ.

This sequence belongs to the PDCD5 family.

This Dictyostelium discoideum (Social amoeba) protein is DNA-binding protein DDB_G0278111.